The sequence spans 217 residues: GTP cyclohydrolase-2 (217 aa).

Arginine 50 to glutamate 54 serves as a coordination point for GTP. 3 residues coordinate Zn(2+): cysteine 55, cysteine 66, and cysteine 68. GTP contacts are provided by residues glutamine 71, glutamate 93–arginine 95, and threonine 115. The Proton acceptor role is filled by aspartate 127. The Nucleophile role is filled by arginine 129. Threonine 150 and lysine 155 together coordinate GTP.

The protein belongs to the GTP cyclohydrolase II family. The cofactor is Zn(2+).

The enzyme catalyses GTP + 4 H2O = 2,5-diamino-6-hydroxy-4-(5-phosphoribosylamino)-pyrimidine + formate + 2 phosphate + 3 H(+). Its pathway is cofactor biosynthesis; riboflavin biosynthesis; 5-amino-6-(D-ribitylamino)uracil from GTP: step 1/4. Functionally, catalyzes the conversion of GTP to 2,5-diamino-6-ribosylamino-4(3H)-pyrimidinone 5'-phosphate (DARP), formate and pyrophosphate. The chain is GTP cyclohydrolase-2 from Actinobacillus succinogenes (strain ATCC 55618 / DSM 22257 / CCUG 43843 / 130Z).